A 248-amino-acid chain; its full sequence is MSIDRQTLLSVAKSIRSGAKSIRAQISPIHPKGYPFVGGFALASIILFWIWTPLGWIGTLLTIWCALFFRNPARVTPVREGLVVSPADGRISMIAPVVPPAELELGEQPMVRISIFMSVFNCHVNRSPVAGKIERIVYRPGKFINAELDKASEDNERNSLVISTPNNGLVGVVQIAGLVARRIVTFVHDGQTLETGERFGLIRFGSRLDVFLPEGTQLLVSEGQTAIAGETVLADFQQADGGRTYRSN.

The active-site Schiff-base intermediate with substrate; via pyruvic acid is the serine 206. At serine 206 the chain carries Pyruvic acid (Ser); by autocatalysis.

The protein belongs to the phosphatidylserine decarboxylase family. PSD-A subfamily. Heterodimer of a large membrane-associated beta subunit and a small pyruvoyl-containing alpha subunit. The cofactor is pyruvate. Is synthesized initially as an inactive proenzyme. Formation of the active enzyme involves a self-maturation process in which the active site pyruvoyl group is generated from an internal serine residue via an autocatalytic post-translational modification. Two non-identical subunits are generated from the proenzyme in this reaction, and the pyruvate is formed at the N-terminus of the alpha chain, which is derived from the carboxyl end of the proenzyme. The post-translation cleavage follows an unusual pathway, termed non-hydrolytic serinolysis, in which the side chain hydroxyl group of the serine supplies its oxygen atom to form the C-terminus of the beta chain, while the remainder of the serine residue undergoes an oxidative deamination to produce ammonia and the pyruvoyl prosthetic group on the alpha chain.

It localises to the cell membrane. The catalysed reaction is a 1,2-diacyl-sn-glycero-3-phospho-L-serine + H(+) = a 1,2-diacyl-sn-glycero-3-phosphoethanolamine + CO2. Its pathway is phospholipid metabolism; phosphatidylethanolamine biosynthesis; phosphatidylethanolamine from CDP-diacylglycerol: step 2/2. Catalyzes the formation of phosphatidylethanolamine (PtdEtn) from phosphatidylserine (PtdSer). This Nitrobacter hamburgensis (strain DSM 10229 / NCIMB 13809 / X14) protein is Phosphatidylserine decarboxylase proenzyme.